Consider the following 218-residue polypeptide: Host range factor 1 (218 aa).

Its function is as follows. Facilitates AcMNPV replication in two non-permissive cell lines, IPLB-Ld652Y and IPLB-LdFB. This chain is Host range factor 1 (HRF-1), found in Lepidoptera (butterflies and moths).